The following is a 449-amino-acid chain: Tubulin beta-6 chain (449 aa).

Gln-11, Glu-69, Ser-138, Gly-142, Thr-143, Gly-144, Asn-204, and Asn-226 together coordinate GTP. Residue Glu-69 coordinates Mg(2+). Positions 425–449 are disordered; sequence YQDATADDEGEYEEDEDEEEILDHE. The span at 429–449 shows a compositional bias: acidic residues; sequence TADDEGEYEEDEDEEEILDHE.

Belongs to the tubulin family. In terms of assembly, dimer of alpha and beta chains. A typical microtubule is a hollow water-filled tube with an outer diameter of 25 nm and an inner diameter of 15 nM. Alpha-beta heterodimers associate head-to-tail to form protofilaments running lengthwise along the microtubule wall with the beta-tubulin subunit facing the microtubule plus end conferring a structural polarity. Microtubules usually have 13 protofilaments but different protofilament numbers can be found in some organisms and specialized cells. It depends on Mg(2+) as a cofactor.

Its subcellular location is the cytoplasm. It is found in the cytoskeleton. In terms of biological role, tubulin is the major constituent of microtubules, a cylinder consisting of laterally associated linear protofilaments composed of alpha- and beta-tubulin heterodimers. Microtubules grow by the addition of GTP-tubulin dimers to the microtubule end, where a stabilizing cap forms. Below the cap, tubulin dimers are in GDP-bound state, owing to GTPase activity of alpha-tubulin. This Arabidopsis thaliana (Mouse-ear cress) protein is Tubulin beta-6 chain (TUBB6).